A 348-amino-acid chain; its full sequence is Sec-independent protein translocase protein TatC (348 aa).

The next 6 membrane-spanning stretches (helical) occupy residues 7 to 27, 162 to 182, 192 to 212, 244 to 264, 278 to 298, and 299 to 319; these read LCLTVSTILCAGFASNLMDIL, VVISFPLLLYFLLQFIIPGLL, CMAVGFGLFLAGTLFCYFIVL, MILMFGLAFELPVVVMPFVKL, YAIVAIAVLAAVITPTPDVAT, and MMLMAVPMYALYEICIILAWM.

The protein belongs to the TatC family. As to quaternary structure, forms a complex with TatA.

Its subcellular location is the cell membrane. Its function is as follows. Part of the twin-arginine translocation (Tat) system that transports large folded proteins containing a characteristic twin-arginine motif in their signal peptide across membranes. In Akkermansia muciniphila (strain ATCC BAA-835 / DSM 22959 / JCM 33894 / BCRC 81048 / CCUG 64013 / CIP 107961 / Muc), this protein is Sec-independent protein translocase protein TatC.